The following is a 951-amino-acid chain: Translation initiation factor IF-2 (951 aa).

2 disordered regions span residues 58-255 (AERK…AVVI) and 305-329 (DVSRDKRRGRQPGRPISEEQAKSLS). The segment covering 101–170 (AEPQYAEPQQ…PQAQPAQPAA (70 aa)) has biased composition (low complexity). A compositionally biased stretch (pro residues) spans 171 to 216 (PVAPPAPSAQPSAPQPPAAQPRPPQPPMPSRPPPAGYRPAPPPGAR). Low complexity predominate over residues 217–234 (PPMSAAPGAPAQPGAAGQ). In terms of domain architecture, tr-type G spans 450–619 (IRPPVVTVMG…ALQSEVLELK (170 aa)). Positions 459–466 (GHVDHGKT) are G1. 459–466 (GHVDHGKT) is a GTP binding site. A G2 region spans residues 484–488 (GITQH). The G3 stretch occupies residues 505-508 (DTPG). Residues 505–509 (DTPGH) and 559–562 (NKVD) contribute to the GTP site. The tract at residues 559–562 (NKVD) is G4. The tract at residues 595–597 (SAR) is G5.

This sequence belongs to the TRAFAC class translation factor GTPase superfamily. Classic translation factor GTPase family. IF-2 subfamily.

It localises to the cytoplasm. In terms of biological role, one of the essential components for the initiation of protein synthesis. Protects formylmethionyl-tRNA from spontaneous hydrolysis and promotes its binding to the 30S ribosomal subunits. Also involved in the hydrolysis of GTP during the formation of the 70S ribosomal complex. This chain is Translation initiation factor IF-2, found in Anaeromyxobacter dehalogenans (strain 2CP-1 / ATCC BAA-258).